A 438-amino-acid polypeptide reads, in one-letter code: MRTLLPPALLTCWLLAPVNSIHPECRFHLEIQEEETKCAELLRSQTEKHKACSGVWDNITCWRPANVGETVTVPCPKVFSNFYSKAGNISKNCTSDGWSETFPDFVDACGYSDPEDESKITFYILVKAIYTLGYSVSLMSLATGSIILCLFRKLHCTRNYIHLNLFLSFILRAISVLVKDDVLYSSSGTLHCPDQPSSWVGCKLSLVFLQYCIMANFFWLLVEGLYLHTLLVAMLPPRRCFLAYLLIGWGLPTVCIGAWTAARLYLEDTGCWDTNDHSVPWWVIRIPILISIIVNFVLFISIIRILLQKLTSPDVGGNDQSQYKRLAKSTLLLIPLFGVHYMVFAVFPISISSKYQILFELCLGSFQGLVVAVLYCFLNSEVQCELKRKWRSRCPTPSASRDYRVCGSSFSRNGSEGALQFHRGSRAQSFLQTETSVI.

A signal peptide spans 1–23 (MRTLLPPALLTCWLLAPVNSIHP). The Extracellular segment spans residues 24–124 (ECRFHLEIQE…EDESKITFYI (101 aa)). Disulfide bonds link cysteine 38–cysteine 61, cysteine 52–cysteine 93, and cysteine 75–cysteine 109. 3 N-linked (GlcNAc...) asparagine glycosylation sites follow: asparagine 58, asparagine 88, and asparagine 92. Residues 125-150 (LVKAIYTLGYSVSLMSLATGSIILCL) traverse the membrane as a helical segment. The Cytoplasmic segment spans residues 151 to 158 (FRKLHCTR). The helical transmembrane segment at 159 to 180 (NYIHLNLFLSFILRAISVLVKD) threads the bilayer. Residues 181–203 (DVLYSSSGTLHCPDQPSSWVGCK) are Extracellular-facing. A disulfide bridge connects residues cysteine 202 and cysteine 271. The chain crosses the membrane as a helical span at residues 204–228 (LSLVFLQYCIMANFFWLLVEGLYLH). Residues 229–239 (TLLVAMLPPRR) lie on the Cytoplasmic side of the membrane. Residues 240–261 (CFLAYLLIGWGLPTVCIGAWTA) traverse the membrane as a helical segment. Over 262–280 (ARLYLEDTGCWDTNDHSVP) the chain is Extracellular. Residues 281–304 (WWVIRIPILISIIVNFVLFISIIR) traverse the membrane as a helical segment. The Cytoplasmic segment spans residues 305-325 (ILLQKLTSPDVGGNDQSQYKR). The chain crosses the membrane as a helical span at residues 326-346 (LAKSTLLLIPLFGVHYMVFAV). Topologically, residues 347–354 (FPISISSK) are extracellular. The helical transmembrane segment at 355 to 378 (YQILFELCLGSFQGLVVAVLYCFL) threads the bilayer. Residues 379 to 438 (NSEVQCELKRKWRSRCPTPSASRDYRVCGSSFSRNGSEGALQFHRGSRAQSFLQTETSVI) lie on the Cytoplasmic side of the membrane.

This sequence belongs to the G-protein coupled receptor 2 family. Interacts with ADCYAP1/PACAP (via N-terminal extracellular domain); activated by PACAP27 and CAPAC38 neuropeptides. Interacts with VIP; the interaction results in VIPR1 activation. In terms of tissue distribution, expressed in CD4+ T-cells, but not in CD8+ T-cells. Expressed in the T-cell lines Jurkat, Peer, MOLT-4, HSB, YT and SUP-T1, but not in the T-cell lines HARRIS and HuT 78.

The protein resides in the cell membrane. Functionally, g protein-coupled receptor activated by the neuropeptides vasoactive intestinal peptide (VIP) and pituitary adenylate cyclase-activating polypeptide (ADCYAP1/PACAP). Binds VIP and both PACAP27 and PACAP38 bioactive peptides with the following order of potency PACAP38 = VIP &gt; PACAP27. Ligand binding causes a conformation change that triggers signaling via guanine nucleotide-binding proteins (G proteins) and modulates the activity of downstream effectors. Activates cAMP-dependent pathway. May be coupled to phospholipase C. The protein is Vasoactive intestinal polypeptide receptor 2 of Homo sapiens (Human).